Here is a 220-residue protein sequence, read N- to C-terminus: Fructose-6-phosphate aldolase 2 (220 aa).

The active-site Schiff-base intermediate with substrate is the Lys-85.

It belongs to the transaldolase family. Type 3A subfamily. In terms of assembly, homodecamer.

The protein localises to the cytoplasm. The catalysed reaction is beta-D-fructose 6-phosphate = dihydroxyacetone + D-glyceraldehyde 3-phosphate. In terms of biological role, catalyzes the reversible formation of fructose 6-phosphate from dihydroxyacetone and D-glyceraldehyde 3-phosphate via an aldolization reaction. This Escherichia coli O6:H1 (strain CFT073 / ATCC 700928 / UPEC) protein is Fructose-6-phosphate aldolase 2 (fsaB).